A 139-amino-acid chain; its full sequence is Small ribosomal subunit protein uS12 (139 aa).

Residues 1-21 (MSTVSQLIKKRRSSKTSKTKA) form a disordered region. The span at 8–18 (IKKRRSSKTSK) shows a compositional bias: basic residues.

This sequence belongs to the universal ribosomal protein uS12 family. Part of the 30S ribosomal subunit. Contacts proteins S8 and S17. May interact with IF1 in the 30S initiation complex.

With S4 and S5 plays an important role in translational accuracy. In terms of biological role, interacts with and stabilizes bases of the 16S rRNA that are involved in tRNA selection in the A site and with the mRNA backbone. Located at the interface of the 30S and 50S subunits, it traverses the body of the 30S subunit contacting proteins on the other side and probably holding the rRNA structure together. The combined cluster of proteins S8, S12 and S17 appears to hold together the shoulder and platform of the 30S subunit. The chain is Small ribosomal subunit protein uS12 from Onion yellows phytoplasma (strain OY-M).